Consider the following 415-residue polypeptide: MKSSELFNRAKTLMPGGVSSPVRAIKPYPFYVERAAGSHLTTVDGADLIDCCLGYGPLILGHAHPEVREAIERQLEKGWLYGTPTPLELDLAGIITGDHPAVEMVRFVSSGSEATMAAIRLARGYTGKQDIIKIEGGFHGAHDAVLVKAGSGATTLGVPDSAGVLADLTAHTRQVPYNDTEALEALLAGNDDVAAFILEPVMGNVGPVLPDDGYLADVREITAAHDVLLILDEVITGYRAGIGGAEVLYDVKPDLATFGKIIGGGLPIGAFGGRCDIMELVAPAGPVYQAGTFSGNPASLAAGYATLRHLHDHPEIYRRLDDATRAIGEAAADAGKGTFVRIGSLFKHFFRDAAPRDYREVKECDTEAFSRFWKAMLEAGIFLPPSQFETNFLSAAHTTQDIKQIAEAYGSCLFA.

Lys-260 carries the N6-(pyridoxal phosphate)lysine modification.

It belongs to the class-III pyridoxal-phosphate-dependent aminotransferase family. HemL subfamily. Requires pyridoxal 5'-phosphate as cofactor.

It is found in the cytoplasm. The enzyme catalyses (S)-4-amino-5-oxopentanoate = 5-aminolevulinate. It functions in the pathway porphyrin-containing compound metabolism; protoporphyrin-IX biosynthesis; 5-aminolevulinate from L-glutamyl-tRNA(Glu): step 2/2. In Methanoculleus marisnigri (strain ATCC 35101 / DSM 1498 / JR1), this protein is Glutamate-1-semialdehyde 2,1-aminomutase.